Reading from the N-terminus, the 640-residue chain is Epithelial sodium channel subunit beta (640 aa).

Residues 1 to 50 (MHVKKYLLKGLHRLQKGPGYTYKELLVWYCDNTNTHGPKRIICEGPKKKA) are Cytoplasmic-facing. The chain crosses the membrane as a helical span at residues 51 to 71 (MWFLLTLLFAALVCWQWGIFI). At 72-532 (RTYLSWEVSV…GGQFGFWMGG (461 aa)) the chain is on the extracellular side. Cystine bridges form between C98–C272, C184–C189, C196–C203, C249–C256, C361–C448, C386–C444, C390–C440, C399–C426, and C401–C415. The N-linked (GlcNAc...) asparagine glycan is linked to N260. The chain crosses the membrane as a helical span at residues 533-553 (SVLCLIEFGEIIIDFVWITII). Residues 554 to 640 (KLVALAKSLR…IESDSEGDAI (87 aa)) are Cytoplasmic-facing. Residues 590–640 (FQPDTAPRSPNTGPYPSEQALPIPGTPPPNYDSLRLQPLDVIESDSEGDAI) form a disordered region. Positions 616–620 (PPPNY) match the PY motif; recruits WW domain-containing proteins and is thereby required for ubiquitination and inhibition of the channel by NEDD4 and NEDD4L motif. Residues 631-640 (IESDSEGDAI) are compositionally biased toward acidic residues. 2 positions are modified to phosphoserine: S633 and S635.

This sequence belongs to the amiloride-sensitive sodium channel (TC 1.A.6) family. SCNN1B subfamily. In terms of assembly, component of the heterotrimeric epithelial sodium channel (ENaC) composed of an alpha/SCNN1A, a beta/SCNN1B and a gamma/SCNN1G subunit. An additional delta/SCNN1D subunit can replace the alpha/SCNN1A subunit to form an alternative channel with specific properties. Interacts with WWP1 (via WW domains). Interacts with WWP2 (via WW domains); inhibits the channel. Interacts with the full-length immature form of PCSK9 (pro-PCSK9); inhibits ENaC by promoting its proteasomal degradation. Interacts (N-glycosylated) with BPIFA1; the interaction is direct and inhibits the proteolytic processing of SCNN1A and SCNN1G and the activation of ENaC. Ubiquitinated. Can be ubiquitinated at multiple sites and undergo monoubiquitination and polyubiquitination. Ubiquitination by NEDD4 or NEDD4L inhibits the ENaC channel through endocytosis, intracellular retention and degradation of its individual subunits. However, some studies could not confirm the ubiquitination of this subunit of the ENaC. Post-translationally, phosphorylated on serine and threonine residues. Aldosterone and insulin increase the basal level of phosphorylation. In terms of processing, N-glycosylated. N-glycosylation is required for interaction with BPIFA1. As to expression, detected in placenta, lung and kidney. Expressed in kidney (at protein level).

The protein resides in the apical cell membrane. It localises to the cytoplasmic vesicle membrane. The catalysed reaction is Na(+)(in) = Na(+)(out). With respect to regulation, originally identified and characterized by its inhibition by the diuretic drug amiloride. This is one of the three pore-forming subunits of the heterotrimeric epithelial sodium channel (ENaC), a critical regulator of sodium balance and fluid homeostasis. ENaC operates in epithelial tissues, where it mediates the electrodiffusion of sodium ions from extracellular fluid through the apical membrane of cells, with water following osmotically. It plays a key role in maintaining sodium homeostasis through electrogenic sodium reabsorption in the kidneys. Additionally, ENaC is essential for airway surface liquid homeostasis, which is crucial for proper mucus clearance. This chain is Epithelial sodium channel subunit beta, found in Homo sapiens (Human).